Reading from the N-terminus, the 407-residue chain is Digeranylgeranylglycerophospholipid reductase (407 aa).

FAD is bound by residues Ala15, Glu34, Cys45, Ala46, Gly48, Arg99, Ala123, Asp281, Gly293, and Ile294.

The protein belongs to the geranylgeranyl reductase family. DGGGPL reductase subfamily. The cofactor is FAD.

It catalyses the reaction a 2,3-bis-O-phytanyl-sn-glycerol 1-phospholipid + 8 oxidized 2[4Fe-4S]-[ferredoxin] = a 2,3-bis-O-(geranylgeranyl)-sn-glycerol 1-phospholipid + 8 reduced 2[4Fe-4S]-[ferredoxin] + 16 H(+). The enzyme catalyses 2,3-bis-O-(phytanyl)-sn-glycerol 1-phosphate + 8 oxidized 2[4Fe-4S]-[ferredoxin] = 2,3-bis-O-(geranylgeranyl)-sn-glycerol 1-phosphate + 8 reduced 2[4Fe-4S]-[ferredoxin] + 16 H(+). It carries out the reaction a 2,3-bis-O-phytanyl-sn-glycerol 1-phospholipid + 8 A = a 2,3-bis-O-(geranylgeranyl)-sn-glycerol 1-phospholipid + 8 AH2. The catalysed reaction is CDP-2,3-bis-O-(geranylgeranyl)-sn-glycerol + 8 AH2 = CDP-2,3-bis-O-(phytanyl)-sn-glycerol + 8 A. It catalyses the reaction archaetidylserine + 8 AH2 = 2,3-bis-O-phytanyl-sn-glycero-3-phospho-L-serine + 8 A. Its pathway is membrane lipid metabolism; glycerophospholipid metabolism. In terms of biological role, is involved in the reduction of 2,3-digeranylgeranylglycerophospholipids (unsaturated archaeols) into 2,3-diphytanylglycerophospholipids (saturated archaeols) in the biosynthesis of archaeal membrane lipids. Catalyzes the formation of archaetidic acid (2,3-di-O-phytanyl-sn-glyceryl phosphate) from 2,3-di-O-geranylgeranylglyceryl phosphate (DGGGP) via the hydrogenation of each double bond of the isoprenoid chains. Is also probably able to reduce double bonds of geranyl groups in CDP-2,3-bis-O-(geranylgeranyl)-sn-glycerol and archaetidylserine, thus acting at various stages in the biosynthesis of archaeal membrane lipids. The protein is Digeranylgeranylglycerophospholipid reductase of Methanosarcina mazei (strain ATCC BAA-159 / DSM 3647 / Goe1 / Go1 / JCM 11833 / OCM 88) (Methanosarcina frisia).